A 571-amino-acid chain; its full sequence is Cytosolic Fe-S cluster assembly factor NAR1 (571 aa).

C20, C62, C65, C68, C204, and C259 together coordinate [4Fe-4S] cluster. The segment at 415 to 437 is disordered; it reads AKPSRMPGGKPIGSARRPNGKAS. C449 and C453 together coordinate [4Fe-4S] cluster.

The protein belongs to the NARF family.

Its function is as follows. Component of the cytosolic Fe/S protein assembly machinery. Required for maturation of extramitochondrial Fe/S proteins. May play a role in the transfer of pre-assembled Fe/S clusters to target apoproteins. The sequence is that of Cytosolic Fe-S cluster assembly factor NAR1 (NAR1) from Sclerotinia sclerotiorum (strain ATCC 18683 / 1980 / Ss-1) (White mold).